The sequence spans 327 residues: MGHAARGKVGVLLLNLGTPDAPTASAVRRYLAEFLSDPRVVEIPKLLWMLILYGIVLRVRPAKSAALYQKVWTEAGSPLMDISLRQTAKLSDKLTADGHQVSVHLAMRYGNPSVASTLREMHKQGIDKLVVLPLYPQYAAPTTGSAFDAIAKELSQWRYLPSLHFINTYHDNPDFIAALVNSIRDDFDKHGKPQKLVLSYHGMPERNLHLGDPYYCFCMKTTRLVAEQLGLSKDEFAITFQSRFGKAKWLQPYTDATMAALPSQGVRDVAIVCPAFSADCLETLEEIVGENGHIFTHAGGEKFRYIPALNDNDDHIAMMANLVKPYL.

Positions 201 and 282 each coordinate Fe cation.

The protein belongs to the ferrochelatase family.

The protein resides in the cytoplasm. The enzyme catalyses heme b + 2 H(+) = protoporphyrin IX + Fe(2+). The protein operates within porphyrin-containing compound metabolism; protoheme biosynthesis; protoheme from protoporphyrin-IX: step 1/1. Catalyzes the ferrous insertion into protoporphyrin IX. The chain is Ferrochelatase 2 from Shewanella oneidensis (strain ATCC 700550 / JCM 31522 / CIP 106686 / LMG 19005 / NCIMB 14063 / MR-1).